Reading from the N-terminus, the 322-residue chain is Undecaprenyl-phosphate 4-deoxy-4-formamido-L-arabinose transferase (322 aa).

At 1-235 (MFEIHPVKKV…TCLTTTPLRM (235 aa)) the chain is on the cytoplasmic side. A helical transmembrane segment spans residues 236-256 (LSLLGSIIAIGGFSIAVLLVI). At 257–269 (LRLTFGPQWAAEG) the chain is on the periplasmic side. The helical transmembrane segment at 270–290 (VFMLFAVLFTFIGAQFIGMGL) threads the bilayer. Residues 291 to 322 (LGEYIGRIYTDVRARPRYFVQQVIRPSSKENE) lie on the Cytoplasmic side of the membrane.

The protein belongs to the glycosyltransferase 2 family.

It is found in the cell inner membrane. The enzyme catalyses UDP-4-deoxy-4-formamido-beta-L-arabinose + di-trans,octa-cis-undecaprenyl phosphate = 4-deoxy-4-formamido-alpha-L-arabinopyranosyl di-trans,octa-cis-undecaprenyl phosphate + UDP. It functions in the pathway glycolipid biosynthesis; 4-amino-4-deoxy-alpha-L-arabinose undecaprenyl phosphate biosynthesis; 4-amino-4-deoxy-alpha-L-arabinose undecaprenyl phosphate from UDP-4-deoxy-4-formamido-beta-L-arabinose and undecaprenyl phosphate: step 1/2. Its pathway is bacterial outer membrane biogenesis; lipopolysaccharide biosynthesis. Catalyzes the transfer of 4-deoxy-4-formamido-L-arabinose from UDP to undecaprenyl phosphate. The modified arabinose is attached to lipid A and is required for resistance to polymyxin and cationic antimicrobial peptides. The protein is Undecaprenyl-phosphate 4-deoxy-4-formamido-L-arabinose transferase of Shigella sonnei (strain Ss046).